The following is a 430-amino-acid chain: Elongation factor Tu (430 aa).

The region spanning 13 to 220 is the tr-type G domain; the sequence is RPHLNIGTIG…ACDKYIALPE (208 aa). The G1 stretch occupies residues 22-29; the sequence is GHVDHGKT. GTP is bound at residue 22–29; it reads GHVDHGKT. Position 29 (T29) interacts with Mg(2+). A G2 region spans residues 66-70; sequence GITIS. The tract at residues 87–90 is G3; that stretch reads DCPG. Residues 87-91 and 142-145 contribute to the GTP site; these read DCPGH and NKCD. The tract at residues 142-145 is G4; it reads NKCD. Residues 188 to 190 are G5; sequence SAL.

The protein belongs to the TRAFAC class translation factor GTPase superfamily. Classic translation factor GTPase family. EF-Tu/EF-1A subfamily. In terms of assembly, monomer.

The protein resides in the cytoplasm. It catalyses the reaction GTP + H2O = GDP + phosphate + H(+). GTP hydrolase that promotes the GTP-dependent binding of aminoacyl-tRNA to the A-site of ribosomes during protein biosynthesis. The sequence is that of Elongation factor Tu from Neorickettsia sennetsu (strain ATCC VR-367 / Miyayama) (Ehrlichia sennetsu).